The following is a 31-amino-acid chain: Alpha-conotoxin Li1.12 (31 aa).

The propeptide occupies 1 to 15; it reads AGNAKMSALMALTIR. 2 cysteine pairs are disulfide-bonded: cysteine 17–cysteine 23 and cysteine 18–cysteine 30. Residue cysteine 30 is modified to Cysteine amide.

It belongs to the conotoxin A superfamily. In terms of tissue distribution, expressed by the venom duct.

Its subcellular location is the secreted. Functionally, alpha-conotoxins act on postsynaptic membranes, they bind to the nicotinic acetylcholine receptors (nAChR) and thus inhibit them. This toxin inhibits alpha-3-beta-4, alpha-6/alpha-3-beta-4, and alpha-2-beta-4 nAChRs. The sequence is that of Alpha-conotoxin Li1.12 from Conus lividus (Livid cone).